A 321-amino-acid polypeptide reads, in one-letter code: Triplex capsid protein 2 (321 aa).

Belongs to the herpesviridae TRX2 protein family. In terms of assembly, interacts with TRX1 and major capisd protein/MCP.

It localises to the virion. The protein localises to the host nucleus. Functionally, structural component of the T=16 icosahedral capsid. The capsid is composed of pentamers and hexamers of major capsid protein/MCP, which are linked together by heterotrimers called triplexes. These triplexes are formed by a single molecule of triplex protein 1/TRX1 and two copies of triplex protein 2/TRX2. Additionally, TRX1 is required for efficient transport of TRX2 to the nucleus, which is the site of capsid assembly. This is Triplex capsid protein 2 from Amazona oratrix (yellow-headed parrot).